A 463-amino-acid chain; its full sequence is MNKVRTRYAPSPTGYLHIGGARTALFCYLFAKHYNGTFVFRLEDTDVKRNVADGERSQLENLKWLGIIPDESPLNPNEKYGKYRQSEKLERYRQIANELVQKGLAYKSYDTSEELEMQHSEAEKNGIASFRYDKNWLKISEEEKQKRDKAGEYSIRFSMPKDVVYEWDDIVRGKISFDSNDIGDWVIQKSDGYPTYNFAVVVDDFDMEITHVLRGEEHITNTPRQLSIYNALGWKAPEFGHLTVITNMEGKKLSKRDTSLKQFIEDYKNDGYDPHAIFNFLSLLGWTSADNSEVMTHDEIIAKFEPSRLSKSPSKFDIKKMQWFSKQYIKNMDNESIINKLNLNNDEWTNLFVDTFKQSVFALKQLLVEKENYDKPSETAPSLTQADLEVVLSFKNEFQNKDFTISQIQEAIDQVAFKTGKKGKNLFMPIRLATTYIEHGPELAKSIYLFGKDIILKRLSQWN.

The short motif at 10–20 (PSPTGYLHIGG) is the 'HIGH' region element. Residues 252 to 256 (KLSKR) carry the 'KMSKS' region motif. Residue Lys-255 coordinates ATP.

It belongs to the class-I aminoacyl-tRNA synthetase family. Glutamate--tRNA ligase type 1 subfamily. As to quaternary structure, monomer.

It is found in the cytoplasm. The enzyme catalyses tRNA(Glu) + L-glutamate + ATP = L-glutamyl-tRNA(Glu) + AMP + diphosphate. Catalyzes the attachment of glutamate to tRNA(Glu) in a two-step reaction: glutamate is first activated by ATP to form Glu-AMP and then transferred to the acceptor end of tRNA(Glu). This chain is Glutamate--tRNA ligase, found in Mycoplasmopsis agalactiae (strain NCTC 10123 / CIP 59.7 / PG2) (Mycoplasma agalactiae).